The following is a 142-amino-acid chain: Heat shock protein HSP.16.4 (142 aa).

Positions 27 to 142 (NLFNDLKSNL…KEIKTSIPIE (116 aa)) constitute a sHSP domain.

Belongs to the small heat shock protein (HSP20) family.

The protein localises to the cytoplasm. This Streptococcus thermophilus protein is Heat shock protein HSP.16.4.